A 370-amino-acid chain; its full sequence is DNA replication and repair protein RecF (370 aa).

30 to 37 (GENAQGKT) serves as a coordination point for ATP.

The protein belongs to the RecF family.

It is found in the cytoplasm. The RecF protein is involved in DNA metabolism; it is required for DNA replication and normal SOS inducibility. RecF binds preferentially to single-stranded, linear DNA. It also seems to bind ATP. The sequence is that of DNA replication and repair protein RecF from Staphylococcus aureus (strain bovine RF122 / ET3-1).